A 406-amino-acid polypeptide reads, in one-letter code: Zinc finger protein 793 (406 aa).

Residues 8-79 (VSFKDVVVGF…EAACPGCHCW (72 aa)) form the KRAB domain. 6 consecutive C2H2-type zinc fingers follow at residues 227–249 (HVCS…QRSH), 255–277 (YGCT…QRIH), 283–305 (FECF…QRTH), 311–333 (FVCS…RKMH), 339–361 (YRCR…WRTH), and 367–389 (YGCN…QKIH).

It belongs to the krueppel C2H2-type zinc-finger protein family.

It localises to the nucleus. Functionally, may be involved in transcriptional regulation. The sequence is that of Zinc finger protein 793 (ZNF793) from Homo sapiens (Human).